The sequence spans 410 residues: Transcription factor Dp-1 (410 aa).

K3 is subject to N6-acetyllysine. S23 is modified (phosphoserine). A compositionally biased stretch (polar residues) spans 73–100 (SNTLVVGSPHTPSTHFASQNQPSDSSPW). The disordered stretch occupies residues 73–116 (SNTLVVGSPHTPSTHFASQNQPSDSSPWSAGKRNRKGEKNGKGL). A compositionally biased stretch (basic residues) spans 104–116 (KRNRKGEKNGKGL). An interaction with CEBPA region spans residues 105-127 (RNRKGEKNGKGLRHFSMKVCEKV). The DNA-binding element occupies 113–195 (GKGLRHFSMK…KKEIKWIGLP (83 aa)). The DEF box signature appears at 161-195 (DQKNIRRRVYDALNVLMAMNIISKEKKEIKWIGLP). Residues 204–277 (NLEVERQRRL…KKTVIDCSIS (74 aa)) form a dimerization region. The segment at 211–327 (RRLERIKQKQ…DLKMARSLVP (117 aa)) is enhances binding of RB protein to E2F. Residues 214–246 (ERIKQKQSQLQELILQQIAFKNLVQRNRHAEQQ) are DCB1. The tract at residues 259–315 (LPFIIVNTSKKTVIDCSISNDKFEYLFNFDNTFEIHDDIEVLKRMGMACGLESGSCS) is DCB2. Residues 370–410 (GMLATSSNGSQYSGSRVETPVSYVGEDDEEDDDFNENDEDD) are disordered. Residues 373 to 385 (ATSSNGSQYSGSR) are compositionally biased toward polar residues. A compositionally biased stretch (acidic residues) spans 394 to 410 (GEDDEEDDDFNENDEDD).

This sequence belongs to the E2F/DP family. As to quaternary structure, component of the E2F:DP transcription factor complex. Forms heterodimers with E2F family members. The complex can interact with hypophosphorylated retinoblastoma protein RB1 and related proteins (RBL1 and RBL2) that inhibit the E2F transactivation domain. This repression involves recruitment of histone deacetylase (HDAC). During the cell cycle, from mid-to-late G1 phase, RB family members become phosphorylated, detach from the DRTF1/E2F complex to render E2F transcriptionally active. Viral oncoproteins, notably E1A, T-antigen and HPV E7, are capable of sequestering RB protein, thus releasing the active complex. Part of the E2F6.com-1 complex in G0 phase is composed of E2F6, MGA, MAX, TFDP1, CBX3, BAT8, EUHMTASE1, RING1, RNF2, MBLR, L3MBTL2 YAF2. Component of the DREAM complex (also named LINC complex) at least composed of E2F4, E2F5, LIN9, LIN37, LIN52, LIN54, MYBL1, MYBL2, RBL1, RBL2, RBBP4, TFDP1 and TFDP2. The complex exists in quiescent cells where it represses cell cycle-dependent genes. It dissociates in S phase when LIN9, LIN37, LIN52 and LIN54 form a subcomplex that binds to MYBL2. The complex TFDP1:E2F1 interacts with CEBPA; the interaction prevents CEBPA binding to target gene promoters and represses its transcriptional activity. Post-translationally, phosphorylation by E2F1-bound cyclin A-CDK2, in the S phase, inhibits E2F-mediated DNA binding and transactivation. In terms of processing, ubiquitinated by the BCR(KBTBD5) complex, leading to its subsequent degradation. As to expression, highest levels in muscle. Also expressed in brain, placenta, liver and kidney. Lower levels in lung and pancreas. Not detected in heart.

The protein localises to the nucleus. The protein resides in the cytoplasm. In terms of biological role, can stimulate E2F-dependent transcription. Binds DNA cooperatively with E2F family members through the E2 recognition site, 5'-TTTC[CG]CGC-3', found in the promoter region of a number of genes whose products are involved in cell cycle regulation or in DNA replication. The E2F1:DP complex appears to mediate both cell proliferation and apoptosis. Blocks adipocyte differentiation by repressing CEBPA binding to its target gene promoters. This is Transcription factor Dp-1 (TFDP1) from Homo sapiens (Human).